The chain runs to 117 residues: Protein SMALL AUXIN UP-REGULATED RNA 54 (117 aa).

Belongs to the ARG7 family. Expressed in trichomes. Hardly observed in leaves.

The protein resides in the cell membrane. Its function is as follows. Provide a mechanistic link between auxin and plasma membrane H(+)-ATPases (PM H(+)-ATPases, e.g. AHA1 and AHA2), and triggers PM H(+)-ATPases activity by promoting phosphorylation of their C-terminal autoinhibitory domain as a result of PP2C-D subfamily of type 2C phosphatases inhibition, thus leading to the acidification of the apoplast and the facilitation of solutes and water uptake to drive cell expansion. Triggers plant growth probably by promoting cell elongation. Regulates branch angles and bending. In Arabidopsis thaliana (Mouse-ear cress), this protein is Protein SMALL AUXIN UP-REGULATED RNA 54.